We begin with the raw amino-acid sequence, 379 residues long: Epoxyqueuosine reductase (379 aa).

The active-site Proton donor is D139. Residues 181 to 213 (IPLPVDQPVEEGCGKCVACMTICPTGAIVEPYT) enclose the 4Fe-4S ferredoxin-type domain. 8 residues coordinate [4Fe-4S] cluster: C193, C196, C199, C203, C219, C246, C249, and C253.

This sequence belongs to the QueG family. As to quaternary structure, monomer. Cob(II)alamin serves as cofactor. It depends on [4Fe-4S] cluster as a cofactor.

The protein resides in the cytoplasm. The catalysed reaction is epoxyqueuosine(34) in tRNA + AH2 = queuosine(34) in tRNA + A + H2O. It participates in tRNA modification; tRNA-queuosine biosynthesis. Functionally, catalyzes the conversion of epoxyqueuosine (oQ) to queuosine (Q), which is a hypermodified base found in the wobble positions of tRNA(Asp), tRNA(Asn), tRNA(His) and tRNA(Tyr). This is Epoxyqueuosine reductase from Shigella dysenteriae serotype 1 (strain Sd197).